Here is an 85-residue protein sequence, read N- to C-terminus: Cell division topological specificity factor (85 aa).

The protein belongs to the MinE family.

Its function is as follows. Prevents the cell division inhibition by proteins MinC and MinD at internal division sites while permitting inhibition at polar sites. This ensures cell division at the proper site by restricting the formation of a division septum at the midpoint of the long axis of the cell. This Chromobacterium violaceum (strain ATCC 12472 / DSM 30191 / JCM 1249 / CCUG 213 / NBRC 12614 / NCIMB 9131 / NCTC 9757 / MK) protein is Cell division topological specificity factor.